The following is a 759-amino-acid chain: Tripartite motif-containing protein 46 (759 aa).

The required for proximal axon localization, axon formation and migration stretch occupies residues 1 to 166; sequence MAEGEDMQTF…VERYRQSVSV (166 aa). An RING-type 1; degenerate zinc finger spans residues 33–59; sequence CPVCQEMYKQPLVLPCTHNVCQACARE. The segment at 67-98 is disordered; sequence IGHGGDPSSEPTSPASTPSTRSPRLSRRTLPK. Low complexity predominate over residues 73-89; sequence PSSEPTSPASTPSTRSP. An RING-type 2; degenerate zinc finger spans residues 172 to 231; it reads CQLCKPPPLEATKGCTECRATFCNECFKLFHPWGTQKAQHEPTLPTLSFRPKGLMCPDHK. Residues 222–263 form a B box-type zinc finger; it reads PKGLMCPDHKEEVTHYCKTCQRLVCQLCRVRRTHSGHKITPV. 4 residues coordinate Zn(2+): Cys-227, His-230, Cys-249, and His-255. Positions 322 to 400 form a coiled coil; that stretch reads AVLEEKRASL…RATEALQTFR (79 aa). Ser-330 is modified (phosphoserine). Positions 370–427 constitute a COS domain; the sequence is LKETDQPCFVQAAKQLHNRIARATEALQTFRPAASSSFRHCQLDVGREMKLLTELSFL. The required for microtubule association, proximal axon localization and axon formation stretch occupies residues 411-429; the sequence is QLDVGREMKLLTELSFLRV. One can recognise a Fibronectin type-III domain in the interval 429–528; it reads VPEAPVIDTQ…EDVHLHTPPA (100 aa). A B30.2/SPRY domain is found at 526-747; the sequence is PPAPVLHFFL…LQEPVGTKPE (222 aa). Ser-627 carries the post-translational modification Phosphoserine.

Belongs to the TRIM/RBCC family. Interacts with TUBB3 and TUBA4A. In terms of tissue distribution, expressed in the central nervous system, including pyramidal neurons and interneurons in the cortex and hippocampus and all neuronal cell types in the cerebral and cerebellar cortex, and in the peripheral nervous system, including the dorsal root ganglion neurons.

The protein resides in the cell projection. The protein localises to the axon. It is found in the cytoplasm. It localises to the cytoskeleton. Its function is as follows. Microtubule-associated protein that is involved in the formation of parallel microtubule bundles linked by cross-bridges in the proximal axon. Required for the uniform orientation and maintenance of the parallel microtubule fascicles, which are important for efficient cargo delivery and trafficking in axons. Thereby also required for proper axon formation, the establishment of neuronal polarity and proper neuronal migration. The protein is Tripartite motif-containing protein 46 (Trim46) of Mus musculus (Mouse).